The following is a 463-amino-acid chain: D(5)-like dopamine receptor (463 aa).

The Extracellular portion of the chain corresponds to 1 to 39 (MENFYNETEPTEPRGGVDPLRVVTAAEDVPAPVGGVSVR). Asn6 carries an N-linked (GlcNAc...) asparagine glycan. Residues 40–65 (ALTGCVLCALIVSTLLGNTLVCAAVI) form a helical membrane-spanning segment. Residues 66 to 76 (KFRHLRSKVTN) lie on the Cytoplasmic side of the membrane. The helical transmembrane segment at 77 to 103 (AFVVSLAVSDLFVAVLVMPWRAVSEVA) threads the bilayer. Topologically, residues 104 to 112 (GVWLFGRFC) are extracellular. A disulfide bridge connects residues Cys112 and Cys194. Residues 113 to 135 (DTWVAFDIMCSTASILNLCVISM) traverse the membrane as a helical segment. The Cytoplasmic portion of the chain corresponds to 136 to 154 (DRYWAISNPFRYERRMTRR). The helical transmembrane segment at 155–180 (FAFLMIAVAWTLSVLISFIPVQLNWH) threads the bilayer. Topologically, residues 181 to 198 (RADNNSSAHEQGDCNASL) are extracellular. Residues 199–223 (NRTYAISSSLISFYIPVLIMVGTYT) form a helical membrane-spanning segment. Over 224–273 (RIFRIAQTQIRRISSLERAAGQRAQNQSHRASTHDESALKTSFKRETKVL) the chain is Cytoplasmic. The helical transmembrane segment at 274-301 (KTLSVIMGVFVFCWLPFFVLNCVVPFCD) threads the bilayer. At 302–315 (VDKVGEPPCVSDTT) the chain is on the extracellular side. A helical membrane pass occupies residues 316 to 337 (FNIFVWFGWANSSLNPVIYAFN). Topologically, residues 338-463 (ADFRKAFTTI…PGQIQDLGDL (126 aa)) are cytoplasmic.

The protein belongs to the G-protein coupled receptor 1 family.

The protein localises to the cell membrane. Receptor for dopamine. This Takifugu rubripes (Japanese pufferfish) protein is D(5)-like dopamine receptor (dl).